We begin with the raw amino-acid sequence, 939 residues long: Progesterone receptor (939 aa).

Over residues 1-11 the composition is skewed to basic and acidic residues; the sequence is MTERTGKDARA. Residues 1-174 are AF3; mediates transcriptional activation (in isoform B); the sequence is MTERTGKDAR…RSSQGAACPL (174 aa). Positions 1–302 are disordered; that stretch reads MTERTGKDAR…AEQDAPAPGC (302 aa). The modulating, Ala/Pro-rich stretch occupies residues 1 to 572; the sequence is MTERTGKDAR…YSFESLPQKI (572 aa). Residue Lys7 forms a Glycyl lysine isopeptide (Lys-Gly) (interchain with G-Cter in SUMO) linkage. Positions 15 to 26 are enriched in low complexity; it reads AGGAPSPAPAAE. Ser20 bears the Phosphoserine mark. Residues 27–36 show a composition bias toward basic and acidic residues; that stretch reads PESRRRDGGR. Positions 49 to 67 are enriched in low complexity; it reads AAAAAAAAAAASAAPSAPS. A Phosphoserine modification is found at Ser141. The interval 175–314 is mediates transcriptional transrepression (in isoform A); it reads MSRPEGKAGD…LATTMMDFIH (140 aa). The short motif at 193-197 is the Nuclear localization signal element; the sequence is KGPPR. Ser200 is modified (phosphoserine). Low complexity-rich tracts occupy residues 211–230 and 257–278; these read GAHAWPGAAGKAATQPAALG and PAAAAGAAPAAPGTAPGGTAPV. A Phosphoserine; by MAPK1 modification is found at Ser303. Ser349 carries the post-translational modification Phosphoserine; by MAPK. Lys392 participates in a covalent cross-link: Glycyl lysine isopeptide (Lys-Gly) (interchain with G-Cter in SUMO); alternate. A Glycyl lysine isopeptide (Lys-Gly) (interchain with G-Cter in ubiquitin); alternate cross-link involves residue Lys392. Ser404 is subject to Phosphoserine; by CDK2. The AF1; mediates transcriptional activation stretch occupies residues 463-552; that stretch reads PALECVLYKA…VYQPYLNYLR (90 aa). Residue Lys537 forms a Glycyl lysine isopeptide (Lys-Gly) (interchain with G-Cter in SUMO) linkage. NR C4-type zinc fingers lie at residues 573–593 and 609–633; these read CLICGDEASGCHYGVLTCGSC and CAGRNDCIVDKIRRKNCPACRLRKC. The segment at residues 573-645 is a DNA-binding region (nuclear receptor); the sequence is CLICGDEASG…AGMVLGGRKF (73 aa). Ser682 carries the phosphoserine modification. Residues 685–919 enclose the NR LBD domain; it reads QDIQLIPPLI…EFPEMMSEVI (235 aa). The interval 693–939 is AF2; mediates transcriptional activation; sequence LINLLMSIEP…MVKPLLFHKK (247 aa).

Belongs to the nuclear hormone receptor family. NR3 subfamily. Interacts with SMARD1 and UNC45A. Interacts with CUEDC2; the interaction promotes ubiquitination, decreases sumoylation, and represses transcriptional activity. Interacts with PIAS3; the interaction promotes sumoylation of PR in a hormone-dependent manner, inhibits DNA-binding, and alters nuclear export. Interacts with SP1; the interaction requires ligand-induced phosphorylation on Ser-349 by ERK1/2-MAPK. Interacts with PRMT2. Isoform A interacts with NCOR2. Isoform B (but not isoform A) interacts with NCOA2 and NCOA1. Isoform B (but not isoform A) interacts with KLF9. Interacts with GTF2B. Phosphorylated on multiple serine sites. Several of these sites are hormone-dependent. Phosphorylation on Ser-303 occurs preferentially on isoform B, is highly hormone-dependent and modulates ubiquitination and sumoylation on Lys-392. Phosphorylation on Ser-303 and Ser-349 also requires induction by hormone. Basal phosphorylation on Ser-200 and Ser-404 is increased in response to progesterone and can be phosphorylated in vitro by the CDK2-A1 complex. Increased levels of phosphorylation on Ser-404 also in the presence of EGF, heregulin, IGF, PMA and FBS. Phosphorylation at this site by CDK2 is ligand-independent, and increases nuclear translocation and transcriptional activity. Phosphorylation at Ser-303, but not at Ser-200, is impaired during the G(2)/M phase of the cell cycle. Phosphorylation on Ser-349 by ERK1/2 MAPK is required for interaction with SP1. In terms of processing, sumoylation is hormone-dependent and represses transcriptional activity. Sumoylation on all three sites is enhanced by PIAS3. Desumoylated by SENP1. Sumoylation on Lys-392, the main site of sumoylation, is repressed by ubiquitination on the same site, and modulated by phosphorylation at Ser-303. Post-translationally, ubiquitination is hormone-dependent and represses sumoylation on the same site. Promoted by MAPK-mediated phosphorylation on Ser-303. Palmitoylated by ZDHHC7 and ZDHHC21. Palmitoylation is required for plasma membrane targeting and for rapid intracellular signaling via ERK and AKT kinases and cAMP generation. In terms of tissue distribution, expressed in mammary gland and uterus.

Its subcellular location is the nucleus. The protein localises to the cytoplasm. In terms of biological role, the steroid hormones and their receptors are involved in the regulation of eukaryotic gene expression and affect cellular proliferation and differentiation in target tissues. Depending on the isoform, progesterone receptor functions as a transcriptional activator or repressor. Ligand-dependent transdominant repressor of steroid hormone receptor transcriptional activity including repression of its isoform B, MR and ER. Transrepressional activity may involve recruitment of corepressor NCOR2. Functionally, transcriptional activator of several progesteron-dependent promoters in a variety of cell types. Involved in activation of SRC-dependent MAPK signaling on hormone stimulation. The sequence is that of Progesterone receptor (PGR) from Canis lupus familiaris (Dog).